The sequence spans 89 residues: Elongation factor 1-beta (89 aa).

It belongs to the EF-1-beta/EF-1-delta family.

Promotes the exchange of GDP for GTP in EF-1-alpha/GDP, thus allowing the regeneration of EF-1-alpha/GTP that could then be used to form the ternary complex EF-1-alpha/GTP/AAtRNA. This chain is Elongation factor 1-beta, found in Methanobrevibacter smithii (strain ATCC 35061 / DSM 861 / OCM 144 / PS).